The chain runs to 774 residues: Cilium assembly protein DZIP1L (774 aa).

The C2H2-type zinc-finger motif lies at 166-189 (HTCHLCDKTFMNATFLRGHIQRRH). Positions 204–450 (LGEVLEELRA…RKVLAALRKN (247 aa)) form a coiled coil. Disordered stretches follow at residues 415-435 (MPKA…ASLE), 515-674 (NKEV…ASSG), and 686-774 (KQLE…IPGW). Positions 421 to 433 (TEEDSSEEELEAS) are enriched in acidic residues. A phosphoserine mark is found at Ser-425 and Ser-426. The span at 515 to 526 (NKEVSSRVKQRW) shows a compositional bias: basic and acidic residues. Residues 597–616 (GPSSTPVSPGSGLSSTPPFS) are compositionally biased toward low complexity.

The protein belongs to the DZIP C2H2-type zinc-finger protein family. As to quaternary structure, interacts with SEPTIN2.

It is found in the cytoplasm. Its subcellular location is the cytoskeleton. The protein localises to the cilium basal body. It localises to the microtubule organizing center. The protein resides in the centrosome. It is found in the centriole. Involved in primary cilium formation. Probably acts as a transition zone protein required for localization of PKD1/PC1 and PKD2/PC2 to the ciliary membrane. This Mus musculus (Mouse) protein is Cilium assembly protein DZIP1L.